The chain runs to 218 residues: Probable nicotinate-nucleotide adenylyltransferase (218 aa).

It belongs to the NadD family.

It catalyses the reaction nicotinate beta-D-ribonucleotide + ATP + H(+) = deamido-NAD(+) + diphosphate. It functions in the pathway cofactor biosynthesis; NAD(+) biosynthesis; deamido-NAD(+) from nicotinate D-ribonucleotide: step 1/1. In terms of biological role, catalyzes the reversible adenylation of nicotinate mononucleotide (NaMN) to nicotinic acid adenine dinucleotide (NaAD). The protein is Probable nicotinate-nucleotide adenylyltransferase of Sodalis glossinidius (strain morsitans).